Reading from the N-terminus, the 245-residue chain is tRNA (guanine-N(1)-)-methyltransferase (245 aa).

S-adenosyl-L-methionine-binding positions include G113 and 133-138 (IGDYVL).

This sequence belongs to the RNA methyltransferase TrmD family. Homodimer.

The protein localises to the cytoplasm. It carries out the reaction guanosine(37) in tRNA + S-adenosyl-L-methionine = N(1)-methylguanosine(37) in tRNA + S-adenosyl-L-homocysteine + H(+). Its function is as follows. Specifically methylates guanosine-37 in various tRNAs. The sequence is that of tRNA (guanine-N(1)-)-methyltransferase from Actinobacillus succinogenes (strain ATCC 55618 / DSM 22257 / CCUG 43843 / 130Z).